The chain runs to 124 residues: Small ribosomal subunit protein uS13 (124 aa).

The tract at residues 91 to 124 is disordered; the sequence is HRKGLPVNGQNTRNNARTRKGKPKAVTGKKQAGK.

This sequence belongs to the universal ribosomal protein uS13 family. As to quaternary structure, part of the 30S ribosomal subunit. Forms a loose heterodimer with protein S19. Forms two bridges to the 50S subunit in the 70S ribosome.

Located at the top of the head of the 30S subunit, it contacts several helices of the 16S rRNA. In the 70S ribosome it contacts the 23S rRNA (bridge B1a) and protein L5 of the 50S subunit (bridge B1b), connecting the 2 subunits; these bridges are implicated in subunit movement. Contacts the tRNAs in the A and P-sites. The polypeptide is Small ribosomal subunit protein uS13 (Acholeplasma laidlawii (strain PG-8A)).